We begin with the raw amino-acid sequence, 130 residues long: Methylglyoxal synthase (130 aa).

The MGS-like domain occupies 1 to 130 (MSKPRIALIA…DLARNMQDVC (130 aa)). Residues His-11, Lys-15, 37 to 40 (TGTT), and 57 to 58 (SG) each bind substrate. Asp-63 (proton donor/acceptor) is an active-site residue. Position 90 (His-90) interacts with substrate.

It belongs to the methylglyoxal synthase family.

It catalyses the reaction dihydroxyacetone phosphate = methylglyoxal + phosphate. Catalyzes the formation of methylglyoxal from dihydroxyacetone phosphate. The protein is Methylglyoxal synthase of Burkholderia vietnamiensis (strain G4 / LMG 22486) (Burkholderia cepacia (strain R1808)).